The sequence spans 194 residues: Imidazoleglycerol-phosphate dehydratase (194 aa).

This sequence belongs to the imidazoleglycerol-phosphate dehydratase family.

The protein resides in the cytoplasm. It catalyses the reaction D-erythro-1-(imidazol-4-yl)glycerol 3-phosphate = 3-(imidazol-4-yl)-2-oxopropyl phosphate + H2O. It functions in the pathway amino-acid biosynthesis; L-histidine biosynthesis; L-histidine from 5-phospho-alpha-D-ribose 1-diphosphate: step 6/9. This Bacillus cereus (strain G9842) protein is Imidazoleglycerol-phosphate dehydratase.